The sequence spans 93 residues: Alpha-defensin 5 (93 aa).

An N-terminal signal peptide occupies residues M1–A19. A propeptide spanning residues D20 to L58 is cleaved from the precursor. 3 disulfide bridges follow: C64–C92, C66–C81, and C71–C91.

Belongs to the alpha-defensin family.

It localises to the secreted. In terms of biological role, probably contributes to the antimicrobial barrier function of the small bowel mucosa. The protein is Alpha-defensin 5 (Defa5) of Mus musculus (Mouse).